A 150-amino-acid polypeptide reads, in one-letter code: FAD synthase (150 aa).

Residues 11 to 12, 16 to 19, D96, and Y124 each bind ATP; these read TF and HPGH.

Belongs to the archaeal FAD synthase family. In terms of assembly, homodimer. Requires a divalent metal cation as cofactor.

It catalyses the reaction FMN + ATP + H(+) = FAD + diphosphate. It participates in cofactor biosynthesis; FAD biosynthesis; FAD from FMN: step 1/1. Its function is as follows. Catalyzes the transfer of the AMP portion of ATP to flavin mononucleotide (FMN) to produce flavin adenine dinucleotide (FAD) coenzyme. This is FAD synthase from Methanocaldococcus fervens (strain DSM 4213 / JCM 15782 / AG86) (Methanococcus fervens).